Here is a 280-residue protein sequence, read N- to C-terminus: Urease accessory protein UreD (280 aa).

Belongs to the UreD family. UreD, UreF and UreG form a complex that acts as a GTP-hydrolysis-dependent molecular chaperone, activating the urease apoprotein by helping to assemble the nickel containing metallocenter of UreC. The UreE protein probably delivers the nickel.

It localises to the cytoplasm. Functionally, required for maturation of urease via the functional incorporation of the urease nickel metallocenter. In Staphylococcus saprophyticus subsp. saprophyticus (strain ATCC 15305 / DSM 20229 / NCIMB 8711 / NCTC 7292 / S-41), this protein is Urease accessory protein UreD.